Consider the following 282-residue polypeptide: Chromatin modification-related protein YNG2 (282 aa).

A coiled-coil region spans residues 35–86 (LIEEKKKYEQKESQIHKFIRQQGSIPKHPQEDGLDKEIKESLLKCQSLQREK). The disordered stretch occupies residues 123-217 (DGDMDSAAEA…KGQNGSPENE (95 aa)). The span at 129–143 (AAEASRESSVVSNSS) shows a compositional bias: low complexity. Ser183 is modified (phosphoserine). A Phosphothreonine modification is found at Thr185. Phosphoserine is present on Ser188. Over residues 191–203 (IEKKIARTKEFKN) the composition is skewed to basic and acidic residues. Over residues 204-214 (SRNGKGQNGSP) the composition is skewed to polar residues. A PHD-type zinc finger spans residues 222–271 (TLYCFCQRVSFGEMVACDGPNCKYEWFHYDCVNLKEPPKGTWYCPECKIE). The Zn(2+) site is built by Cys225, Cys227, Cys238, Cys243, His249, Cys252, Cys265, and Cys268.

Belongs to the ING family. As to quaternary structure, interacts with H3K4me3 and to a lesser extent with H3K4me2. Component of the NuA4 histone acetyltransferase complex composed of at least ACT1, ARP4, YAF9, VID21, SWC4, EAF3, EAF5, EAF6, EAF7, EPL1, ESA1, TRA1 and YNG2.

The protein resides in the nucleus. Component of the NuA4 histone acetyltransferase complex which is involved in transcriptional activation of selected genes principally by acetylation of nucleosomal histone H4 and H2A. The NuA4 complex is also involved in DNA repair. Involved in cell cycle progression and meiosis. This Saccharomyces cerevisiae (strain ATCC 204508 / S288c) (Baker's yeast) protein is Chromatin modification-related protein YNG2 (YNG2).